Consider the following 132-residue polypeptide: Small ribosomal subunit protein uS8 (132 aa).

Belongs to the universal ribosomal protein uS8 family. As to quaternary structure, part of the 30S ribosomal subunit. Contacts proteins S5 and S12.

Functionally, one of the primary rRNA binding proteins, it binds directly to 16S rRNA central domain where it helps coordinate assembly of the platform of the 30S subunit. This Rhodopseudomonas palustris (strain HaA2) protein is Small ribosomal subunit protein uS8.